A 511-amino-acid chain; its full sequence is Cobyric acid synthase (511 aa).

The GATase cobBQ-type domain occupies 251–443 (LLDIAIICLP…IHGIFDNDVF (193 aa)). Cys-332 functions as the Nucleophile in the catalytic mechanism. The active site involves His-435.

This sequence belongs to the CobB/CobQ family. CobQ subfamily.

It participates in cofactor biosynthesis; adenosylcobalamin biosynthesis. In terms of biological role, catalyzes amidations at positions B, D, E, and G on adenosylcobyrinic A,C-diamide. NH(2) groups are provided by glutamine, and one molecule of ATP is hydrogenolyzed for each amidation. The polypeptide is Cobyric acid synthase (Listeria monocytogenes serotype 4a (strain HCC23)).